The primary structure comprises 733 residues: Fibronectin type III domain-containing protein 7 (733 aa).

Residues 1-25 (MAGGRETCLPLIGFILICLKMVASA) form the signal peptide. 8 Fibronectin type-III domains span residues 28–115 (APEI…TVLA), 116–202 (APIL…TSPR), 203–288 (APAN…TVAC), 289–373 (APGR…TAPC), 374–459 (CPSD…TAPC), 460–544 (SPEI…TVPC), 545–632 (CPTG…CCPL), and 631–715 (PLGV…YSVT). Asparagine 230 carries an N-linked (GlcNAc...) asparagine glycan. N-linked (GlcNAc...) asparagine glycosylation occurs at asparagine 433.

The protein resides in the secreted. The polypeptide is Fibronectin type III domain-containing protein 7 (FNDC7) (Homo sapiens (Human)).